The following is a 214-amino-acid chain: Pyrrolidone-carboxylate peptidase 2 (214 aa).

Catalysis depends on residues glutamate 78, cysteine 141, and histidine 165.

It belongs to the peptidase C15 family. In terms of assembly, homotetramer.

It is found in the cytoplasm. The enzyme catalyses Release of an N-terminal pyroglutamyl group from a polypeptide, the second amino acid generally not being Pro.. Its function is as follows. Removes 5-oxoproline from various penultimate amino acid residues except L-proline. In Streptococcus pneumoniae serotype 4 (strain ATCC BAA-334 / TIGR4), this protein is Pyrrolidone-carboxylate peptidase 2.